The following is a 126-amino-acid chain: Large ribosomal subunit protein bL12 (126 aa).

This sequence belongs to the bacterial ribosomal protein bL12 family. As to quaternary structure, homodimer. Part of the ribosomal stalk of the 50S ribosomal subunit. Forms a multimeric L10(L12)X complex, where L10 forms an elongated spine to which 2 to 4 L12 dimers bind in a sequential fashion. Binds GTP-bound translation factors.

Its function is as follows. Forms part of the ribosomal stalk which helps the ribosome interact with GTP-bound translation factors. Is thus essential for accurate translation. The protein is Large ribosomal subunit protein bL12 of Methylobacterium sp. (strain 4-46).